A 60-amino-acid polypeptide reads, in one-letter code: Alpha-conotoxin-like 289 (60 aa).

The first 16 residues, 1 to 16 (MFTVFLLVVLATTVVS), serve as a signal peptide directing secretion. Residues 17 to 42 (FTSDRAFRGRNAAAKASGLVGLTDKR) constitute a propeptide that is removed on maturation. Q43 is modified (pyrrolidone carboxylic acid). 2 disulfide bridges follow: C45–C51 and C46–C59. Residues 47–49 (SYP) form a ser-Xaa-Pro motif, crucial for potent interaction with nAChR region. C59 carries the cysteine amide modification.

Belongs to the conotoxin A superfamily. As to expression, expressed by the venom duct.

It localises to the secreted. Its function is as follows. Alpha-conotoxins act on postsynaptic membranes, they bind to the nicotinic acetylcholine receptors (nAChR) and thus inhibit them. This is Alpha-conotoxin-like 289 from Conus ammiralis (Admiral cone).